The following is a 312-amino-acid chain: GDP-L-fucose synthase (312 aa).

11–17 provides a ligand contact to NADP(+); that stretch reads GGRGMVG. Catalysis depends on Tyr-136, which acts as the Proton donor/acceptor. NADP(+) contacts are provided by Lys-140 and His-179. Substrate is bound by residues Lys-187, Trp-202, and Arg-209.

It belongs to the NAD(P)-dependent epimerase/dehydratase family. Fucose synthase subfamily.

It carries out the reaction GDP-beta-L-fucose + NADP(+) = GDP-4-dehydro-alpha-D-rhamnose + NADPH + H(+). It functions in the pathway nucleotide-sugar biosynthesis; GDP-L-fucose biosynthesis via de novo pathway; GDP-L-fucose from GDP-alpha-D-mannose: step 2/2. Catalyzes the two-step NADP-dependent conversion of GDP-4-dehydro-6-deoxy-D-mannose to GDP-fucose, involving an epimerase and a reductase reaction. This chain is GDP-L-fucose synthase, found in Azorhizobium caulinodans (strain ATCC 43989 / DSM 5975 / JCM 20966 / LMG 6465 / NBRC 14845 / NCIMB 13405 / ORS 571).